We begin with the raw amino-acid sequence, 60 residues long: Transcriptional regulator Brz (60 aa).

Residues 8–52 (CPRCGSDVKMGLPMGATVKSVTAASRQEPTSDTQKVRTVECRNDH) form a C4-type; atypical zinc finger.

The protein belongs to the Brz family.

Activates transcription of bacteriorhodopsin (bop) and phytoene synthase (crtB1). May interact with DNA or RNA via the zinc finger motif. The protein is Transcriptional regulator Brz (brz) of Halobacterium salinarum (strain ATCC 29341 / DSM 671 / R1).